Consider the following 70-residue polypeptide: UPF0337 protein BC_3635 (70 aa).

This sequence belongs to the UPF0337 (CsbD) family.

The sequence is that of UPF0337 protein BC_3635 from Bacillus cereus (strain ATCC 14579 / DSM 31 / CCUG 7414 / JCM 2152 / NBRC 15305 / NCIMB 9373 / NCTC 2599 / NRRL B-3711).